The primary structure comprises 485 residues: Cytochrome P450 monooxygenase tndB (485 aa).

Residues 20–40 (VYGISAVIAVGLAIYSASLAI) form a helical membrane-spanning segment. Residue Cys481 participates in heme binding.

This sequence belongs to the cytochrome P450 family. It depends on heme as a cofactor.

It localises to the membrane. It functions in the pathway secondary metabolite biosynthesis; terpenoid biosynthesis. In terms of biological role, cytochrome P450 monooxygenase; part of the gene cluster that mediates the biosynthesis of talaronoid C, a fusicoccane diterpenoid with an unprecedented tricyclic 5/8/6 ring system. The first step in the pathway is performed by the fusicoccadiene synthase tndC that possesses both prenyl transferase and terpene cyclase activity, converting isopentenyl diphosphate and dimethylallyl diphosphate into geranylgeranyl diphosphate (GGDP) and further converting GGDP into talarodiene, a precursor for talaronoid C. The remaining enzymes from the cluster include the cytochrome P450 monooxygenase tndB, the aldehyde reductase tndE and the alcohol dehydrogenase tndF that are involved in the conversion of talarodiene into talaronoid C. This Aspergillus flavipes protein is Cytochrome P450 monooxygenase tndB.